The chain runs to 247 residues: Acyl-coenzyme A thioesterase THEM5 (247 aa).

Residue Asp167 is the Proton donor/acceptor of the active site.

It belongs to the THEM4/THEM5 thioesterase family. As to quaternary structure, homodimer.

The protein localises to the mitochondrion matrix. The catalysed reaction is hexadecanoyl-CoA + H2O = hexadecanoate + CoA + H(+). It catalyses the reaction (9Z,12Z)-octadecadienoyl-CoA + H2O = (9Z,12Z)-octadecadienoate + CoA + H(+). The enzyme catalyses tetradecanoyl-CoA + H2O = tetradecanoate + CoA + H(+). It carries out the reaction (9Z)-octadecenoyl-CoA + H2O = (9Z)-octadecenoate + CoA + H(+). The catalysed reaction is (9Z)-hexadecenoyl-CoA + H2O = (9Z)-hexadecenoate + CoA + H(+). It catalyses the reaction (5Z,8Z,11Z,14Z)-eicosatetraenoyl-CoA + H2O = (5Z,8Z,11Z,14Z)-eicosatetraenoate + CoA + H(+). The enzyme catalyses octadecanoyl-CoA + H2O = octadecanoate + CoA + H(+). Has acyl-CoA thioesterase activity towards long-chain (C16 and C18) fatty acyl-CoA substrates, with a preference for linoleoyl-CoA and other unsaturated long-chain fatty acid-CoA esters. Plays an important role in mitochondrial fatty acid metabolism, and in remodeling of the mitochondrial lipid cardiolipin. Required for normal mitochondrial function. This chain is Acyl-coenzyme A thioesterase THEM5 (THEM5), found in Homo sapiens (Human).